Reading from the N-terminus, the 370-residue chain is Actin-related protein 2/3 complex subunit 1A (370 aa).

WD repeat units follow at residues 6–45, 50–89, 140–179, 202–241, 244–284, and 322–365; these read FLLEPITCHAWNRDRTQIALSPNNHEVHIYKKNGSQWTKA, EHNGHITGIDWAPKSDRIVTCGADRNAYVWSQKDGIWKPT, PIRSTVLSLDWHPNNVLLAAGSCDFKCRVFSAYIKEVDEK, GTGGWVHGVSFSASGNRLAWVSHDSTVSVADASKSVQVST, TEFL…TFVS, and LHQN…SSIQ.

The protein belongs to the WD repeat ARPC1 family. As to quaternary structure, probable component of the Arp2/3 complex in which it may replace ARPC1B.

It localises to the cytoplasm. It is found in the cytoskeleton. The protein resides in the nucleus. Functionally, probably functions as a component of the Arp2/3 complex which is involved in regulation of actin polymerization and together with an activating nucleation-promoting factor (NPF) mediates the formation of branched actin networks. In addition to its role in the cytoplasmic cytoskeleton, the Arp2/3 complex also promotes actin polymerization in the nucleus, thereby regulating gene transcription and repair of damaged DNA. The chain is Actin-related protein 2/3 complex subunit 1A (Arpc1a) from Mus musculus (Mouse).